Here is a 148-residue protein sequence, read N- to C-terminus: MTTTPIHPTRPQTNSNRVIPTSTQGSTLADILERVLDKGIVIAGDISISIASTELIHIRIRLLISSVDKAREMGINWWENDPYLSSKSQRLVEENQQLQQRLESLETQLRLLTSAAKEETTLTANNPEDLQPMYEVNSQEGDNSQLEA.

Disordered stretches follow at residues 1 to 21 (MTTTPIHPTRPQTNSNRVIPT) and 118 to 148 (EETTLTANNPEDLQPMYEVNSQEGDNSQLEA). The span at 136–148 (VNSQEGDNSQLEA) shows a compositional bias: polar residues.

This sequence belongs to the gas vesicle GvpA family. Interacts with GvpA.

Its subcellular location is the gas vesicle. In terms of biological role, a minor component of the gas vesicle, might be involved in nucleating gas vesicle formation. Gas vesicles (GV) are hollow, gas filled proteinaceous nanostructures. During planktonic growth they allow positioning of the organism at a favorable depth for light or nutrient acquisition. Cluster expression in E.coli (gvpA1-gvpA2-gvpC-gvpN-gvpJ-gvpK-gvpF-gvpG-gvpV-gvpW) allows cells to float and produces irregularly shaped gas vesicles. This chain is Gas vesicle protein J, found in Nostoc sp. (strain PCC 7120 / SAG 25.82 / UTEX 2576).